We begin with the raw amino-acid sequence, 105 residues long: Vacuolar ATPase assembly integral membrane protein VMA21 homolog (105 aa).

The disordered stretch occupies residues 1-26; sequence MSTKNKKAAGGNGGAPKQTRQQSHDS. The Cytoplasmic portion of the chain corresponds to 1 to 36; that stretch reads MSTKNKKAAGGNGGAPKQTRQQSHDSQDYSSFKTVL. A helical transmembrane segment spans residues 37–57; that stretch reads FYCMLIVFLPVLTFFVLKGFV. Residues 58 to 68 lie on the Lumenal side of the membrane; the sequence is LDQFLNISEVK. A helical transmembrane segment spans residues 69-89; the sequence is VNIASAVGAVVALHIALGLYI. Topologically, residues 90-105 are cytoplasmic; sequence YRAYFGAPGSKGSKTD.

Belongs to the VMA21 family.

It localises to the endoplasmic reticulum membrane. Its subcellular location is the endoplasmic reticulum-Golgi intermediate compartment membrane. The protein resides in the cytoplasmic vesicle. It is found in the COPII-coated vesicle membrane. Its function is as follows. Required for the assembly of the V0 complex of the vacuolar ATPase (V-ATPase) in the endoplasmic reticulum. The protein is Vacuolar ATPase assembly integral membrane protein VMA21 homolog of Drosophila sechellia (Fruit fly).